Consider the following 306-residue polypeptide: Methionyl-tRNA formyltransferase (306 aa).

Residue 108-111 participates in (6S)-5,6,7,8-tetrahydrofolate binding; that stretch reads SLLP.

It belongs to the Fmt family.

The catalysed reaction is L-methionyl-tRNA(fMet) + (6R)-10-formyltetrahydrofolate = N-formyl-L-methionyl-tRNA(fMet) + (6S)-5,6,7,8-tetrahydrofolate + H(+). Its function is as follows. Attaches a formyl group to the free amino group of methionyl-tRNA(fMet). The formyl group appears to play a dual role in the initiator identity of N-formylmethionyl-tRNA by promoting its recognition by IF2 and preventing the misappropriation of this tRNA by the elongation apparatus. The chain is Methionyl-tRNA formyltransferase from Paenarthrobacter aurescens (strain TC1).